Here is a 139-residue protein sequence, read N- to C-terminus: ATP synthase epsilon chain (139 aa).

Residues 89–110 are disordered; it reads EARAEQARAEAEARRREAQSEH.

The protein belongs to the ATPase epsilon chain family. F-type ATPases have 2 components, CF(1) - the catalytic core - and CF(0) - the membrane proton channel. CF(1) has five subunits: alpha(3), beta(3), gamma(1), delta(1), epsilon(1). CF(0) has three main subunits: a, b and c.

The protein resides in the cell membrane. Its function is as follows. Produces ATP from ADP in the presence of a proton gradient across the membrane. The chain is ATP synthase epsilon chain from Chloroflexus aggregans (strain MD-66 / DSM 9485).